Here is a 459-residue protein sequence, read N- to C-terminus: Putrescine aminotransferase (459 aa).

Pyridoxal 5'-phosphate is bound by residues 150 to 151 (GT) and glutamine 274. Lysine 300 carries the N6-(pyridoxal phosphate)lysine modification. Threonine 332 contributes to the pyridoxal 5'-phosphate binding site.

This sequence belongs to the class-III pyridoxal-phosphate-dependent aminotransferase family. Putrescine aminotransferase subfamily. Pyridoxal 5'-phosphate is required as a cofactor.

It catalyses the reaction an alkane-alpha,omega-diamine + 2-oxoglutarate = an omega-aminoaldehyde + L-glutamate. The catalysed reaction is putrescine + 2-oxoglutarate = 1-pyrroline + L-glutamate + H2O. It carries out the reaction cadaverine + 2-oxoglutarate = 5-aminopentanal + L-glutamate. It functions in the pathway amine and polyamine degradation; putrescine degradation; 4-aminobutanal from putrescine (transaminase route): step 1/1. In terms of biological role, catalyzes the aminotransferase reaction from putrescine to 2-oxoglutarate, leading to glutamate and 4-aminobutanal, which spontaneously cyclizes to form 1-pyrroline. This is the first step in one of two pathways for putrescine degradation, where putrescine is converted into 4-aminobutanoate (gamma-aminobutyrate or GABA) via 4-aminobutanal. Also functions as a cadaverine transaminase in a a L-lysine degradation pathway to succinate that proceeds via cadaverine, glutarate and L-2-hydroxyglutarate. In Escherichia coli O6:K15:H31 (strain 536 / UPEC), this protein is Putrescine aminotransferase.